The primary structure comprises 496 residues: Cobyric acid synthase (496 aa).

The GATase cobBQ-type domain maps to 258–427 (TLTVAAIRLP…WHGLLDNDAL (170 aa)). Cys339 (nucleophile) is an active-site residue. His419 is a catalytic residue.

The protein belongs to the CobB/CobQ family. CobQ subfamily.

It functions in the pathway cofactor biosynthesis; adenosylcobalamin biosynthesis. Catalyzes amidations at positions B, D, E, and G on adenosylcobyrinic A,C-diamide. NH(2) groups are provided by glutamine, and one molecule of ATP is hydrogenolyzed for each amidation. The sequence is that of Cobyric acid synthase from Mycolicibacterium smegmatis (strain ATCC 700084 / mc(2)155) (Mycobacterium smegmatis).